The primary structure comprises 2698 residues: Zinc finger protein 292 (2698 aa).

Residues 567–589 form a C2H2-type 1 zinc finger; the sequence is YSCPICAKNFNSKDSFVPHVTLH. S654 carries the post-translational modification Phosphoserine. C2H2-type zinc fingers lie at residues 681–705, 722–744, 750–774, 779–803, 807–831, and 1085–1110; these read FNCPVTFCKKGFKYFKNLIAHVKGH, VICQYCRRHFVSVTHLNDHLQMH, YICIQMKCKAGFNSYAELLAHRKEH, AKCLFPKCGRIFSQAYLLYDHEAQH, YTCKFTGCGKVYRSQSEMEKHQDGH, and FSCQVEGCTRTYNSSQSIGKHMKTAH. Over residues 822–834 the composition is skewed to basic and acidic residues; sequence SEMEKHQDGHSHP. The interval 822–894 is disordered; that stretch reads SEMEKHQDGH…AEPAVTKHGQ (73 aa). K1104 is subject to N6-acetyllysine. A Phosphoserine modification is found at S1146. Over residues 1278–1325 the composition is skewed to polar residues; sequence NSTNHYPSQTDGNINSSFLKGGSSENGVFPSQVSSADDFSSTSAQPST. The disordered stretch occupies residues 1278 to 1349; it reads NSTNHYPSQT…KERKPKHNKR (72 aa). A C2H2-type 8; degenerate zinc finger spans residues 1361-1383; sequence FICSRCYRAFTNPRSLGGHLSKR. Polar residues-rich tracts occupy residues 1574–1603 and 1624–1633; these read FSSSTEPPQNFTNNSAHVSVISGPQNTRSS and SVSNTSQNVL. The disordered stretch occupies residues 1574–1656; that stretch reads FSSSTEPPQN…PVPDTNTRSD (83 aa). C2H2-type zinc fingers lie at residues 1879-1904 and 1924-1949; these read FVCQNQGCNYSAMTKDALFKHYGKIH and FKCVVPSCTKTFTRNSNLRAHCQLVH. Residues 1964–1997 form a disordered region; it reads PYGRKSQSENLSSPQNNQVKKQPSMAEETKTESQ. Over residues 1971-1984 the composition is skewed to polar residues; the sequence is SENLSSPQNNQVKK. K2020 is modified (N6-acetyllysine). Residues 2021 to 2032 show a composition bias toward basic and acidic residues; that stretch reads QLAEKKSPEKPE. The interval 2021–2075 is disordered; the sequence is QLAEKKSPEKPESSSQPVTSSAEQYNANLANLKTKGRKNKRHRKEKEEKREKNPV. Residues 2038-2051 are compositionally biased toward polar residues; sequence VTSSAEQYNANLAN. A compositionally biased stretch (basic residues) spans 2054–2064; sequence TKGRKNKRHRK. 4 C2H2-type zinc fingers span residues 2091–2116, 2149–2174, 2193–2218, and 2233–2258; these read YCCVHQGCFAAFTIQQNLILHYQAVH, FRCQVSDCSRIFQAITGLIQHYMKLH, FPCDQLECKLSFTTYLSYVVHLEVDH, and YKCDCEGCDRIYATRSNLLRHIFNKH. Positions 2262–2271 are enriched in basic residues; that stretch reads HKAHLIRPRK. Residues 2262–2323 form a disordered region; sequence HKAHLIRPRK…KSNLENKSAK (62 aa). Residues 2362-2386 form a C2H2-type 15 zinc finger; the sequence is YPCMIKGCTSVVTSESNIIRHYKCH. Disordered regions lie at residues 2411-2454, 2467-2553, and 2580-2608; these read GKEI…GEKD, LINE…EEHP, and KQKKNSDRDHSNSGSKRGSHSSSRRHVDK. Basic and acidic residues predominate over residues 2421–2437; it reads KNDKKDPDSSVLEKNDN. Over residues 2470–2488 the composition is skewed to polar residues; it reads EDSTNAENQGNTTLKGNNE. Composition is skewed to basic and acidic residues over residues 2489–2501 and 2580–2590; these read FQEHDSCTSERQK and KQKKNSDRDHS. The segment covering 2596-2606 has biased composition (basic residues); sequence RGSHSSSRRHV.

The protein belongs to the krueppel C2H2-type zinc-finger protein family. Expressed in postnatal day 1 (P1) pituitary. Also detected in presomatotrophic cell line GHFT1-5.

It localises to the nucleus. In terms of biological role, may be involved in transcriptional regulation. This chain is Zinc finger protein 292, found in Mus musculus (Mouse).